The sequence spans 417 residues: Serine hydroxymethyltransferase (417 aa).

Residues Leu121 and Gly125–Leu127 each bind (6S)-5,6,7,8-tetrahydrofolate. Lys229 carries the N6-(pyridoxal phosphate)lysine modification. (6S)-5,6,7,8-tetrahydrofolate is bound at residue Ser355–Phe357.

It belongs to the SHMT family. As to quaternary structure, homodimer. Pyridoxal 5'-phosphate is required as a cofactor.

The protein localises to the cytoplasm. The catalysed reaction is (6R)-5,10-methylene-5,6,7,8-tetrahydrofolate + glycine + H2O = (6S)-5,6,7,8-tetrahydrofolate + L-serine. The protein operates within one-carbon metabolism; tetrahydrofolate interconversion. It participates in amino-acid biosynthesis; glycine biosynthesis; glycine from L-serine: step 1/1. Its function is as follows. Catalyzes the reversible interconversion of serine and glycine with tetrahydrofolate (THF) serving as the one-carbon carrier. This reaction serves as the major source of one-carbon groups required for the biosynthesis of purines, thymidylate, methionine, and other important biomolecules. Also exhibits THF-independent aldolase activity toward beta-hydroxyamino acids, producing glycine and aldehydes, via a retro-aldol mechanism. The sequence is that of Serine hydroxymethyltransferase from Proteus mirabilis (strain HI4320).